Consider the following 238-residue polypeptide: Arginine ABC transporter permease protein ArtQ (238 aa).

Over 1–14 (MNEFFPLASAAGMT) the chain is Periplasmic. One can recognise an ABC transmembrane type-1 domain in the interval 11–223 (AGMTVGLAVC…VITLLSQYIL (213 aa)). Residues 15-35 (VGLAVCALIVGLALAMFFAVW) form a helical membrane-spanning segment. Residues 36 to 48 (ESAKWRPVAWAGS) are Cytoplasmic-facing. The chain crosses the membrane as a helical span at residues 49 to 69 (ALVTILRGLPEILVVLFIYFG). The Periplasmic segment spans residues 70–98 (SSQLLLTLSDGFTINLGFVQIPVQMDIEN). Residues 99–119 (FDVSPFLCGVIALSLLYAAYA) traverse the membrane as a helical segment. At 120-168 (SQTLRGALKAVPVGQWESGQALGLSKSAIFFRLVMPQMWRHALPGLGNQ) the chain is on the cytoplasmic side. The helical transmembrane segment at 169–189 (WLVLLKDTALVSLISVNDLML) threads the bilayer. The Periplasmic portion of the chain corresponds to 190–201 (QTKSIATRTQEP). A helical transmembrane segment spans residues 202 to 222 (FTWYIVAAAIYLVITLLSQYI). Over 223–238 (LKRIDLRATRFERRPS) the chain is Cytoplasmic.

The protein belongs to the binding-protein-dependent transport system permease family. HisMQ subfamily. As to quaternary structure, the complex is composed of two ATP-binding proteins (ArtP), two transmembrane proteins (ArtM and ArtQ) and two solute-binding proteins (ArtJ and ArtI).

The protein resides in the cell inner membrane. In terms of biological role, part of the ABC transporter complex ArtPIQMJ involved in arginine transport. Probably responsible for the translocation of the substrate across the membrane. In Escherichia coli O6:H1 (strain CFT073 / ATCC 700928 / UPEC), this protein is Arginine ABC transporter permease protein ArtQ (artQ).